Reading from the N-terminus, the 313-residue chain is Carbamate kinase 2 (313 aa).

This sequence belongs to the carbamate kinase family.

The protein resides in the cytoplasm. It carries out the reaction hydrogencarbonate + NH4(+) + ATP = carbamoyl phosphate + ADP + H2O + H(+). It participates in metabolic intermediate metabolism; carbamoyl phosphate degradation; CO(2) and NH(3) from carbamoyl phosphate: step 1/1. The chain is Carbamate kinase 2 (arcC2) from Staphylococcus aureus (strain Mu50 / ATCC 700699).